Reading from the N-terminus, the 379-residue chain is Arginine biosynthesis bifunctional protein ArgJ (379 aa).

6 residues coordinate substrate: threonine 141, lysine 163, threonine 174, glutamate 252, asparagine 374, and threonine 379. The active-site Nucleophile is the threonine 174.

Belongs to the ArgJ family. Heterotetramer of two alpha and two beta chains.

It is found in the cytoplasm. It catalyses the reaction N(2)-acetyl-L-ornithine + L-glutamate = N-acetyl-L-glutamate + L-ornithine. It carries out the reaction L-glutamate + acetyl-CoA = N-acetyl-L-glutamate + CoA + H(+). Its pathway is amino-acid biosynthesis; L-arginine biosynthesis; L-ornithine and N-acetyl-L-glutamate from L-glutamate and N(2)-acetyl-L-ornithine (cyclic): step 1/1. It functions in the pathway amino-acid biosynthesis; L-arginine biosynthesis; N(2)-acetyl-L-ornithine from L-glutamate: step 1/4. Catalyzes two activities which are involved in the cyclic version of arginine biosynthesis: the synthesis of N-acetylglutamate from glutamate and acetyl-CoA as the acetyl donor, and of ornithine by transacetylation between N(2)-acetylornithine and glutamate. The protein is Arginine biosynthesis bifunctional protein ArgJ of Aquifex aeolicus (strain VF5).